Reading from the N-terminus, the 192-residue chain is Pyridoxine/pyridoxamine 5'-phosphate oxidase (192 aa).

FMN contacts are provided by residues 41-46 (RMMLLK), 56-57 (FT), Arg62, Lys63, and Gln85. Lys46 serves as a coordination point for substrate. Substrate contacts are provided by Tyr103, Arg107, and Ser111. Residues 120–121 (QS) and Trp165 each bind FMN. Substrate is bound at residue 171–173 (RLH). Arg175 is a binding site for FMN.

This sequence belongs to the pyridoxamine 5'-phosphate oxidase family. As to quaternary structure, homodimer. FMN is required as a cofactor.

The catalysed reaction is pyridoxamine 5'-phosphate + O2 + H2O = pyridoxal 5'-phosphate + H2O2 + NH4(+). The enzyme catalyses pyridoxine 5'-phosphate + O2 = pyridoxal 5'-phosphate + H2O2. Its pathway is cofactor metabolism; pyridoxal 5'-phosphate salvage; pyridoxal 5'-phosphate from pyridoxamine 5'-phosphate: step 1/1. The protein operates within cofactor metabolism; pyridoxal 5'-phosphate salvage; pyridoxal 5'-phosphate from pyridoxine 5'-phosphate: step 1/1. Its function is as follows. Catalyzes the oxidation of either pyridoxine 5'-phosphate (PNP) or pyridoxamine 5'-phosphate (PMP) into pyridoxal 5'-phosphate (PLP). This is Pyridoxine/pyridoxamine 5'-phosphate oxidase from Zymomonas mobilis subsp. mobilis (strain ATCC 31821 / ZM4 / CP4).